We begin with the raw amino-acid sequence, 330 residues long: Aspartate--ammonia ligase (330 aa).

Belongs to the class-II aminoacyl-tRNA synthetase family. AsnA subfamily.

The protein resides in the cytoplasm. The enzyme catalyses L-aspartate + NH4(+) + ATP = L-asparagine + AMP + diphosphate + H(+). It functions in the pathway amino-acid biosynthesis; L-asparagine biosynthesis; L-asparagine from L-aspartate (ammonia route): step 1/1. The protein is Aspartate--ammonia ligase of Pectobacterium carotovorum subsp. carotovorum (strain PC1).